The following is a 312-amino-acid chain: Ribosomal protein L11 methyltransferase (312 aa).

S-adenosyl-L-methionine-binding residues include T160, G181, D203, and N246.

Belongs to the methyltransferase superfamily. PrmA family.

The protein localises to the cytoplasm. The enzyme catalyses L-lysyl-[protein] + 3 S-adenosyl-L-methionine = N(6),N(6),N(6)-trimethyl-L-lysyl-[protein] + 3 S-adenosyl-L-homocysteine + 3 H(+). In terms of biological role, methylates ribosomal protein L11. This is Ribosomal protein L11 methyltransferase from Staphylococcus aureus (strain JH1).